The primary structure comprises 393 residues: NAD(P)H-quinone oxidoreductase subunit H, chloroplastic (393 aa).

It belongs to the complex I 49 kDa subunit family. In terms of assembly, NDH is composed of at least 16 different subunits, 5 of which are encoded in the nucleus.

It is found in the plastid. The protein localises to the chloroplast thylakoid membrane. It catalyses the reaction a plastoquinone + NADH + (n+1) H(+)(in) = a plastoquinol + NAD(+) + n H(+)(out). The catalysed reaction is a plastoquinone + NADPH + (n+1) H(+)(in) = a plastoquinol + NADP(+) + n H(+)(out). In terms of biological role, NDH shuttles electrons from NAD(P)H:plastoquinone, via FMN and iron-sulfur (Fe-S) centers, to quinones in the photosynthetic chain and possibly in a chloroplast respiratory chain. The immediate electron acceptor for the enzyme in this species is believed to be plastoquinone. Couples the redox reaction to proton translocation, and thus conserves the redox energy in a proton gradient. The chain is NAD(P)H-quinone oxidoreductase subunit H, chloroplastic from Angiopteris evecta (Mule's foot fern).